A 347-amino-acid polypeptide reads, in one-letter code: Glycerol-1-phosphate dehydrogenase [NAD(P)+] (347 aa).

NAD(+)-binding positions include 94–98 (GKVID) and 116–119 (TAAS). Asp121 lines the substrate pocket. Ser125 provides a ligand contact to NAD(+). Asp168 lines the substrate pocket. Zn(2+) contacts are provided by Asp168 and His248. His252 contributes to the substrate binding site. His264 is a Zn(2+) binding site.

The protein belongs to the glycerol-1-phosphate dehydrogenase family. Homooctamer. Zn(2+) serves as cofactor.

The protein localises to the cytoplasm. It catalyses the reaction sn-glycerol 1-phosphate + NAD(+) = dihydroxyacetone phosphate + NADH + H(+). It carries out the reaction sn-glycerol 1-phosphate + NADP(+) = dihydroxyacetone phosphate + NADPH + H(+). It participates in membrane lipid metabolism; glycerophospholipid metabolism. Its activity is regulated as follows. Partially inhibited by divalent metal cations such as Co(2+), Cu(2+) and Ni(2+). Functionally, catalyzes the NAD(P)H-dependent reduction of dihydroxyacetonephosphate (DHAP or glycerone phosphate) to glycerol 1-phosphate (G1P). The G1P thus generated is used as the glycerophosphate backbone of phospholipids in the cellular membranes of Archaea. Is also able to catalyze the reverse reaction, i.e. the NAD(P)(+)-dependent oxidation of G1P but not of G3P. Is not active toward glycerol, dihydroxyacetone, glyceraldehyde-3-phosphate, glyceraldehyde and glycerol-2-phosphate. The chain is Glycerol-1-phosphate dehydrogenase [NAD(P)+] (egsA) from Methanothermobacter thermautotrophicus (strain ATCC 29096 / DSM 1053 / JCM 10044 / NBRC 100330 / Delta H) (Methanobacterium thermoautotrophicum).